Consider the following 326-residue polypeptide: Nucleoporin Nup37 (326 aa).

WD repeat units lie at residues 6 to 54 (SRNA…FQEE), 61 to 109 (IQYK…LFTS), 115 to 154 (NEYK…IWNL), 159 to 195 (TAHF…FYDL), 199 to 237 (QAIL…IWDI), 242 to 282 (YPQN…QFQI), and 287 to 324 (HPQP…FWVT).

As to quaternary structure, component of the Nup107-160 subcomplex of the nuclear pore complex (NPC). The Nup107-160 subcomplex includes NUP160, NUP133, NUP107, NUP98, NUP85, NUP43, NUP37, SEH1 and SEC13.

It is found in the chromosome. It localises to the centromere. Its subcellular location is the kinetochore. The protein resides in the nucleus. The protein localises to the nuclear pore complex. Its function is as follows. Component of the Nup107-160 subcomplex of the nuclear pore complex (NPC). The Nup107-160 subcomplex is required for the assembly of a functional NPC. The Nup107-160 subcomplex is also required for normal kinetochore microtubule attachment, mitotic progression and chromosome segregation. The protein is Nucleoporin Nup37 (NUP37) of Homo sapiens (Human).